Reading from the N-terminus, the 184-residue chain is GTP cyclohydrolase 1 (184 aa).

3 residues coordinate Zn(2+): cysteine 75, histidine 78, and cysteine 146.

This sequence belongs to the GTP cyclohydrolase I family. Homomer.

The catalysed reaction is GTP + H2O = 7,8-dihydroneopterin 3'-triphosphate + formate + H(+). Its pathway is cofactor biosynthesis; 7,8-dihydroneopterin triphosphate biosynthesis; 7,8-dihydroneopterin triphosphate from GTP: step 1/1. This Streptococcus pneumoniae serotype 19F (strain G54) protein is GTP cyclohydrolase 1.